We begin with the raw amino-acid sequence, 218 residues long: Large ribosomal subunit protein uL3 (218 aa).

The segment at 132-152 (FKGQGASHGTQAVHRRPGSIG) is disordered.

It belongs to the universal ribosomal protein uL3 family. Part of the 50S ribosomal subunit. Forms a cluster with proteins L14 and L19.

Functionally, one of the primary rRNA binding proteins, it binds directly near the 3'-end of the 23S rRNA, where it nucleates assembly of the 50S subunit. This Rhodococcus erythropolis (strain PR4 / NBRC 100887) protein is Large ribosomal subunit protein uL3.